Here is a 153-residue protein sequence, read N- to C-terminus: S-ribosylhomocysteine lyase (153 aa).

Residues His-57, His-61, and Cys-124 each coordinate Fe cation.

This sequence belongs to the LuxS family. In terms of assembly, homodimer. Requires Fe cation as cofactor.

It carries out the reaction S-(5-deoxy-D-ribos-5-yl)-L-homocysteine = (S)-4,5-dihydroxypentane-2,3-dione + L-homocysteine. Functionally, involved in the synthesis of autoinducer 2 (AI-2) which is secreted by bacteria and is used to communicate both the cell density and the metabolic potential of the environment. The regulation of gene expression in response to changes in cell density is called quorum sensing. Catalyzes the transformation of S-ribosylhomocysteine (RHC) to homocysteine (HC) and 4,5-dihydroxy-2,3-pentadione (DPD). The protein is S-ribosylhomocysteine lyase of Oceanobacillus iheyensis (strain DSM 14371 / CIP 107618 / JCM 11309 / KCTC 3954 / HTE831).